The chain runs to 361 residues: Probable mannose-1-phosphate guanylyltransferase 2 (361 aa).

2 residues coordinate GDP-alpha-D-mannose: Leu6 and Val7. Diphosphate contacts are provided by Gly9, Gly11, Thr12, Arg13, and Lys23. The GDP-alpha-D-mannose site is built by Gly85, Asn109, Asp111, Gly146, and Asn173.

It belongs to the transferase hexapeptide repeat family.

It catalyses the reaction alpha-D-mannose 1-phosphate + GTP + H(+) = GDP-alpha-D-mannose + diphosphate. It participates in nucleotide-sugar biosynthesis; GDP-alpha-D-mannose biosynthesis; GDP-alpha-D-mannose from alpha-D-mannose 1-phosphate (GTP route): step 1/1. Functionally, catalyzes a reaction of the Smirnoff-Wheeler pathway, the major route to ascorbate biosynthesis in plants. This is Probable mannose-1-phosphate guanylyltransferase 2 from Oryza sativa subsp. japonica (Rice).